Here is a 158-residue protein sequence, read N- to C-terminus: MRPLSVQSKFEDVATSTSVNHHGVTPQSPWHSPVPYLFGGLAAMLGLIAFALLILACSYWRLSSSGEEDGQNVDEEKESRSGDKAANGAYEEKFLVIMAGEDLPRYLATPAMKKCTCGGHEGKMVISQEESVAKEEEKMREGEEEKVKDTGETTTTSH.

Topologically, residues 1 to 36 are extracellular; that stretch reads MRPLSVQSKFEDVATSTSVNHHGVTPQSPWHSPVPY. Residues 37–57 form a helical membrane-spanning segment; that stretch reads LFGGLAAMLGLIAFALLILAC. The Cytoplasmic segment spans residues 58 to 158; sequence SYWRLSSSGE…DTGETTTTSH (101 aa). A disordered region spans residues 65-85; sequence SGEEDGQNVDEEKESRSGDKA. Residues 66 to 76 show a composition bias toward acidic residues; that stretch reads GEEDGQNVDEE. The VIMAG motif lies at 96–100; sequence VIMAG. The tract at residues 126–158 is disordered; sequence ISQEESVAKEEEKMREGEEEKVKDTGETTTTSH. The segment covering 131–151 has biased composition (basic and acidic residues); that stretch reads SVAKEEEKMREGEEEKVKDTG.

Belongs to the GLUTAMINE DUMPER 1 (TC 9.B.60) family. Interacts with LOG2. Ubiquitinated by LOG2 (in vitro). Expressed in the vascular tissues and in hydathodes. Expressed in the phloem and xylem (at the protein level).

Its subcellular location is the cell membrane. In terms of biological role, probable subunit of an amino acid transporter involved in the regulation of the amino acid metabolism. Stimulates amino acid export by activating nonselective amino acid facilitators. Required the interaction with the RING-type E3 ubiquitin-protein ligase LOG2 to fulfill its function. Plays a role in the Gln export at hydathodes, at xylem parenchyma into xylem sap and from mesophyll into leaf apoplasm. Acts upstream genes involved in the salicylic acid (SA) pathway and in the geminivirus-host interaction. The sequence is that of Protein GLUTAMINE DUMPER 1 (GDU1) from Arabidopsis thaliana (Mouse-ear cress).